Consider the following 404-residue polypeptide: D-galactonate dehydratase family member Ent638_1932 (404 aa).

The substrate site is built by N37 and H122. The Proton donor/acceptor role is filled by Y159. A Mg(2+)-binding site is contributed by D212. H214 acts as the Proton donor/acceptor in catalysis. 2 residues coordinate Mg(2+): E238 and E264. Substrate-binding residues include E264, R285, H314, D318, and E341.

The protein belongs to the mandelate racemase/muconate lactonizing enzyme family. GalD subfamily. It depends on Mg(2+) as a cofactor.

The enzyme catalyses D-mannonate = 2-dehydro-3-deoxy-D-gluconate + H2O. Functionally, has low D-mannonate dehydratase activity (in vitro), suggesting that this is not a physiological substrate and that it has no significant role in D-mannonate degradation in vivo. Has no detectable activity with a panel of 70 other acid sugars (in vitro). The polypeptide is D-galactonate dehydratase family member Ent638_1932 (Enterobacter sp. (strain 638)).